Consider the following 163-residue polypeptide: Endoribonuclease YbeY (163 aa).

H126, H130, and H136 together coordinate Zn(2+).

The protein belongs to the endoribonuclease YbeY family. The cofactor is Zn(2+).

It is found in the cytoplasm. Functionally, single strand-specific metallo-endoribonuclease involved in late-stage 70S ribosome quality control and in maturation of the 3' terminus of the 16S rRNA. The protein is Endoribonuclease YbeY of Chelativorans sp. (strain BNC1).